Reading from the N-terminus, the 414-residue chain is Adenylosuccinate synthetase (414 aa).

Residues 12–18 (GDEGKGK) and 40–42 (GHT) contribute to the GTP site. Residue Asp-13 is the Proton acceptor of the active site. Mg(2+)-binding residues include Asp-13 and Gly-40. IMP is bound by residues 13-16 (DEGK), 38-41 (NAGH), Thr-124, Arg-138, Gln-216, Thr-231, and Arg-297. His-41 (proton donor) is an active-site residue. 293-299 (STTGRPR) is a binding site for substrate. GTP contacts are provided by residues Arg-299, 325–327 (KLD), and 403–405 (STG).

It belongs to the adenylosuccinate synthetase family. In terms of assembly, homodimer. Requires Mg(2+) as cofactor.

The protein resides in the cytoplasm. The catalysed reaction is IMP + L-aspartate + GTP = N(6)-(1,2-dicarboxyethyl)-AMP + GDP + phosphate + 2 H(+). It functions in the pathway purine metabolism; AMP biosynthesis via de novo pathway; AMP from IMP: step 1/2. Its function is as follows. Plays an important role in the de novo pathway of purine nucleotide biosynthesis. Catalyzes the first committed step in the biosynthesis of AMP from IMP. The sequence is that of Adenylosuccinate synthetase from Hydrogenobaculum sp. (strain Y04AAS1).